Here is a 295-residue protein sequence, read N- to C-terminus: Cbb3-type cytochrome c oxidase subunit CcoP (295 aa).

The Cytoplasmic portion of the chain corresponds to 1-31 (MAQKEKDALSGVETTGHEWDGLRELNNPLPK). A helical membrane pass occupies residues 32–52 (WWLYIFYVCIAWSLVYYVLYP). Topologically, residues 53–295 (AWPLGKSYTK…VYVHNLGGGK (243 aa)) are periplasmic. Cytochrome c domains are found at residues 108–200 (FAMA…LSLN) and 207–292 (AAAE…HNLG). Heme c is bound by residues Cys-121, Cys-124, His-125, Met-175, Cys-220, Cys-223, His-224, and Met-269.

Belongs to the CcoP / FixP family. Component of the cbb3-type cytochrome c oxidase at least composed of CcoN, CcoO, CcoQ and CcoP. Requires heme c as cofactor.

It localises to the cell inner membrane. It participates in energy metabolism; oxidative phosphorylation. Its function is as follows. C-type cytochrome. Part of the cbb3-type cytochrome c oxidase complex. CcoP subunit is required for transferring electrons from donor cytochrome c via its heme groups to CcoO subunit. From there, electrons are shuttled to the catalytic binuclear center of CcoN subunit where oxygen reduction takes place. The complex also functions as a proton pump. In Azospirillum brasilense, this protein is Cbb3-type cytochrome c oxidase subunit CcoP.